An 81-amino-acid chain; its full sequence is Putative defensin-like protein 265 (81 aa).

The N-terminal stretch at 1–26 is a signal peptide; sequence MEKTVSRKVVVLAILLSLSCLCIAKA. 3 disulfide bridges follow: C48-C66, C54-C71, and C58-C73.

This sequence belongs to the DEFL family.

It localises to the secreted. This chain is Putative defensin-like protein 265, found in Arabidopsis thaliana (Mouse-ear cress).